We begin with the raw amino-acid sequence, 175 residues long: Large ribosomal subunit protein uL10 (175 aa).

This sequence belongs to the universal ribosomal protein uL10 family. In terms of assembly, part of the ribosomal stalk of the 50S ribosomal subunit. The N-terminus interacts with L11 and the large rRNA to form the base of the stalk. The C-terminus forms an elongated spine to which L12 dimers bind in a sequential fashion forming a multimeric L10(L12)X complex.

Forms part of the ribosomal stalk, playing a central role in the interaction of the ribosome with GTP-bound translation factors. The polypeptide is Large ribosomal subunit protein uL10 (Cyanothece sp. (strain PCC 7425 / ATCC 29141)).